The following is a 140-amino-acid chain: Nucleoside diphosphate kinase (140 aa).

K11, F59, R87, T93, R104, and N114 together coordinate ATP. The active-site Pros-phosphohistidine intermediate is H117.

Belongs to the NDK family. In terms of assembly, homotetramer. Mg(2+) is required as a cofactor.

The protein resides in the cytoplasm. The catalysed reaction is a 2'-deoxyribonucleoside 5'-diphosphate + ATP = a 2'-deoxyribonucleoside 5'-triphosphate + ADP. It catalyses the reaction a ribonucleoside 5'-diphosphate + ATP = a ribonucleoside 5'-triphosphate + ADP. Its function is as follows. Major role in the synthesis of nucleoside triphosphates other than ATP. The ATP gamma phosphate is transferred to the NDP beta phosphate via a ping-pong mechanism, using a phosphorylated active-site intermediate. The polypeptide is Nucleoside diphosphate kinase (Rhodovulum sulfidophilum (Rhodobacter sulfidophilus)).